The primary structure comprises 389 residues: Teichoic acid ribitol-phosphate primase (389 aa).

The protein belongs to the CDP-glycerol glycerophosphotransferase family.

It localises to the cell membrane. The catalysed reaction is 4-O-[(2R)-glycerylphospho]-N-acetyl-beta-D-mannosaminyl-(1-&gt;4)-N-acetyl-alpha-D-glucosaminyl di-trans,octa-cis-undecaprenyl diphosphate + CDP-L-ribitol = 4-O-[1-D-ribitylphospho-(2R)-1-glycerylphospho]-N-acetyl-beta-D-mannosaminyl-(1-&gt;4)-N-acetyl-alpha-D-glucosaminyl di-trans,octa-cis-undecaprenyl diphosphate + CMP + H(+). It participates in cell wall biogenesis; poly(ribitol phosphate) teichoic acid biosynthesis. Catalyzes the addition of a single ribitol phosphate unit onto the glycerol phosphate of the linkage unit, as a primer for polymerisation by TarL. This Bacillus spizizenii (strain ATCC 23059 / NRRL B-14472 / W23) (Bacillus subtilis subsp. spizizenii) protein is Teichoic acid ribitol-phosphate primase (tarK).